A 306-amino-acid chain; its full sequence is Serine/threonine-protein kinase KIN28 (306 aa).

The Protein kinase domain maps to 7 to 290; sequence YTKEKKVGEG…AVQCLESDYF (284 aa). Residues 13-21 and Lys36 contribute to the ATP site; that span reads VGEGTYAVV. The active-site Proton acceptor is the Asp129. Thr162 carries the phosphothreonine; by CAK modification.

It belongs to the protein kinase superfamily. CMGC Ser/Thr protein kinase family. CDC2/CDKX subfamily. In terms of assembly, CCL1 and KIN28 form the TFIIK complex, a component of the TFIIH holo complex. Component of a complex consisting of KIN28, CCL1 and TFB3. Interacts with TFB3. Also interacts with HNT1 and HOG1. Post-translationally, phosphorylation of Thr-162 regulates the affinity of interaction between CCL1, KIN28 and TFB3. Thr-162 phosphorylation does not vary through the cell cycle and is necessary for full kinase activity.

It localises to the nucleus. It catalyses the reaction [DNA-directed RNA polymerase] + ATP = phospho-[DNA-directed RNA polymerase] + ADP + H(+). Catalytic component of the TFIIK complex (KIN28-CCL1 dimer) which is the protein kinase component of transcription factor IIH (TFIIH) and phosphorylates the C-terminal domain of RNA polymerase II during transition from transcription to elongation after preinitiation complex (PIC) formation, thereby positively regulating transcription. TFIIH (or factor B) is essential for both basal and activated transcription, and is involved in nucleotide excision repair (NER) of damaged DNA. TFIIH has DNA-dependent ATPase activity and is essential for polymerase II transcription in vitro. Essential for cell proliferation. The sequence is that of Serine/threonine-protein kinase KIN28 (KIN28) from Saccharomyces cerevisiae (strain ATCC 204508 / S288c) (Baker's yeast).